Consider the following 431-residue polypeptide: Enolase (431 aa).

(2R)-2-phosphoglycerate is bound at residue glutamine 163. Glutamate 205 serves as the catalytic Proton donor. Mg(2+)-binding residues include aspartate 242, glutamate 288, and aspartate 315. Lysine 340, arginine 369, serine 370, and lysine 391 together coordinate (2R)-2-phosphoglycerate. Catalysis depends on lysine 340, which acts as the Proton acceptor.

It belongs to the enolase family. Requires Mg(2+) as cofactor.

The protein localises to the cytoplasm. It is found in the secreted. It localises to the cell surface. The catalysed reaction is (2R)-2-phosphoglycerate = phosphoenolpyruvate + H2O. Its pathway is carbohydrate degradation; glycolysis; pyruvate from D-glyceraldehyde 3-phosphate: step 4/5. Catalyzes the reversible conversion of 2-phosphoglycerate (2-PG) into phosphoenolpyruvate (PEP). It is essential for the degradation of carbohydrates via glycolysis. This Bacillus cereus (strain AH187) protein is Enolase.